A 314-amino-acid chain; its full sequence is Basic endochitinase (314 aa).

The N-terminal stretch at 1 to 20 (MGLWALVAFCLLSLILVGSA) is a signal peptide. In terms of domain architecture, Chitin-binding type-1 spans 21–61 (EQCGGQAGGRVCPGGACCSKFGWCGNTADYCGSGCQSQCSS). 7 disulfide bridges follow: Cys23–Cys38, Cys32–Cys44, Cys37–Cys51, Cys55–Cys59, Cys86–Cys148, Cys160–Cys168, and Cys267–Cys299. Glu130 (proton donor) is an active-site residue.

This sequence belongs to the glycosyl hydrolase 19 family. Chitinase class I subfamily.

The catalysed reaction is Random endo-hydrolysis of N-acetyl-beta-D-glucosaminide (1-&gt;4)-beta-linkages in chitin and chitodextrins.. Its function is as follows. Defense against chitin-containing fungal pathogens. This is Basic endochitinase (CHIT1B) from Vitis vinifera (Grape).